The primary structure comprises 88 residues: Molybdopterin synthase sulfur carrier subunit (88 aa).

Glycine 88 carries the post-translational modification 1-thioglycine; alternate. Glycyl adenylate; alternate is present on glycine 88.

The protein belongs to the MoaD family. MOCS2A subfamily. As to quaternary structure, heterotetramer; composed of 2 small (MOCS2A) and 2 large (MOCS2B) subunits. Post-translationally, C-terminal thiocarboxylation occurs in 2 steps, it is first acyl-adenylated (-COAMP) via the hesA/moeB/thiF part of MOCS3, then thiocarboxylated (-COSH) via the rhodanese domain of MOCS3. Widely expressed. Highest levels are found in heart and skeletal muscle. Lower levels are present in brain, kidney and pancreas. Very low levels are found in lung and peripheral blood leukocytes.

It is found in the cytoplasm. Its subcellular location is the cytosol. Its pathway is cofactor biosynthesis; molybdopterin biosynthesis. In terms of biological role, acts as a sulfur carrier required for molybdopterin biosynthesis. Component of the molybdopterin synthase complex that catalyzes the conversion of precursor Z into molybdopterin by mediating the incorporation of 2 sulfur atoms into precursor Z to generate a dithiolene group. In the complex, serves as sulfur donor by being thiocarboxylated (-COSH) at its C-terminus by MOCS3. After interaction with MOCS2B, the sulfur is then transferred to precursor Z to form molybdopterin. The protein is Molybdopterin synthase sulfur carrier subunit of Homo sapiens (Human).